Consider the following 609-residue polypeptide: UvrABC system protein C (609 aa).

Residues 16–94 enclose the GIY-YIG domain; that stretch reads SSPGVYRMYD…IKQYMPKYNV (79 aa). The UVR domain maps to 203-238; sequence HQVMSVLVGKMEQAASDMRYEQAALYRDQITALRRV.

Belongs to the UvrC family. As to quaternary structure, interacts with UvrB in an incision complex.

It localises to the cytoplasm. In terms of biological role, the UvrABC repair system catalyzes the recognition and processing of DNA lesions. UvrC both incises the 5' and 3' sides of the lesion. The N-terminal half is responsible for the 3' incision and the C-terminal half is responsible for the 5' incision. In Shewanella halifaxensis (strain HAW-EB4), this protein is UvrABC system protein C.